Here is a 233-residue protein sequence, read N- to C-terminus: Phosphoglycolate phosphatase (233 aa).

The active-site Nucleophile is D9. D9 and D11 together coordinate Mg(2+). K154 lines the substrate pocket. D177 and D181 together coordinate Mg(2+).

Belongs to the archaeal SPP-like hydrolase family. The cofactor is Mg(2+).

It carries out the reaction 2-phosphoglycolate + H2O = glycolate + phosphate. Its function is as follows. Catalyzes the dephosphorylation of 2-phosphoglycolate. The chain is Phosphoglycolate phosphatase from Pyrococcus abyssi (strain GE5 / Orsay).